Here is a 727-residue protein sequence, read N- to C-terminus: NADH-ubiquinone oxidoreductase 75 kDa subunit, mitochondrial (727 aa).

A mitochondrion-targeting transit peptide spans 1-23 (MLRIPVKRALIGLSKSPKGYVRS). Residues 30 to 108 (NLIEVFVDGQ…GWNILTNSEK (79 aa)) enclose the 2Fe-2S ferredoxin-type domain. 3 residues coordinate [2Fe-2S] cluster: Cys64, Cys75, and Cys78. The residue at position 84 (Lys84) is an N6-acetyllysine. Residue Cys92 coordinates [2Fe-2S] cluster. The region spanning 108–147 (KSKKAREGVMEFLLANHPLDCPICDQGGECDLQDQSMMFG) is the 4Fe-4S His(Cys)3-ligated-type domain. [4Fe-4S] cluster-binding residues include His124, Cys128, Cys131, Cys137, Cys176, Cys179, Cys182, and Cys226. A 4Fe-4S Mo/W bis-MGD-type domain is found at 245 to 301 (TRKTESIDVMDAVGSNIVVSTRTGEVMRILPRMHEDINEEWISDKTRFAYDGLKRQR). 2 positions are modified to N6-acetyllysine: Lys499 and Lys709.

This sequence belongs to the complex I 75 kDa subunit family. In terms of assembly, core subunit of respiratory chain NADH dehydrogenase (Complex I) which is composed of 45 different subunits. This is the largest subunit of complex I and it is a component of the iron-sulfur (IP) fragment of the enzyme. Complex I associates with ubiquinol-cytochrome reductase complex (Complex III) to form supercomplexes. Interacts with MDM2 and AKAP1. The cofactor is [2Fe-2S] cluster. Requires [4Fe-4S] cluster as cofactor.

The protein resides in the mitochondrion inner membrane. It catalyses the reaction a ubiquinone + NADH + 5 H(+)(in) = a ubiquinol + NAD(+) + 4 H(+)(out). Its function is as follows. Core subunit of the mitochondrial membrane respiratory chain NADH dehydrogenase (Complex I) which catalyzes electron transfer from NADH through the respiratory chain, using ubiquinone as an electron acceptor. Essential for catalysing the entry and efficient transfer of electrons within complex I. Plays a key role in the assembly and stability of complex I and participates in the association of complex I with ubiquinol-cytochrome reductase complex (Complex III) to form supercomplexes. This is NADH-ubiquinone oxidoreductase 75 kDa subunit, mitochondrial (Ndufs1) from Rattus norvegicus (Rat).